Consider the following 1342-residue polypeptide: DNA-directed RNA polymerase subunit beta (1342 aa).

The protein belongs to the RNA polymerase beta chain family. The RNAP catalytic core consists of 2 alpha, 1 beta, 1 beta' and 1 omega subunit. When a sigma factor is associated with the core the holoenzyme is formed, which can initiate transcription.

It catalyses the reaction RNA(n) + a ribonucleoside 5'-triphosphate = RNA(n+1) + diphosphate. DNA-dependent RNA polymerase catalyzes the transcription of DNA into RNA using the four ribonucleoside triphosphates as substrates. The sequence is that of DNA-directed RNA polymerase subunit beta from Buchnera aphidicola subsp. Acyrthosiphon pisum (strain 5A).